A 137-amino-acid polypeptide reads, in one-letter code: Nucleoside diphosphate kinase (137 aa).

ATP contacts are provided by Lys9, Phe58, Arg86, Thr92, Arg103, and Asn113. His121 acts as the Pros-phosphohistidine intermediate in catalysis.

Belongs to the NDK family. As to quaternary structure, homotetramer. Requires Mg(2+) as cofactor.

The protein localises to the cytoplasm. It catalyses the reaction a 2'-deoxyribonucleoside 5'-diphosphate + ATP = a 2'-deoxyribonucleoside 5'-triphosphate + ADP. It carries out the reaction a ribonucleoside 5'-diphosphate + ATP = a ribonucleoside 5'-triphosphate + ADP. Its function is as follows. Major role in the synthesis of nucleoside triphosphates other than ATP. The ATP gamma phosphate is transferred to the NDP beta phosphate via a ping-pong mechanism, using a phosphorylated active-site intermediate. In Streptococcus pneumoniae (strain P1031), this protein is Nucleoside diphosphate kinase.